A 358-amino-acid polypeptide reads, in one-letter code: Adenosine deaminase (358 aa).

Zn(2+) contacts are provided by histidine 14 and histidine 16. The substrate site is built by histidine 16, aspartate 18, and glycine 183. Histidine 212 is a binding site for Zn(2+). Glutamate 215 serves as the catalytic Proton donor. Aspartate 294 serves as a coordination point for Zn(2+). Aspartate 295 is a substrate binding site.

This sequence belongs to the metallo-dependent hydrolases superfamily. Adenosine and AMP deaminases family. Zn(2+) serves as cofactor.

Its subcellular location is the cell membrane. The protein localises to the cell junction. It is found in the cytoplasmic vesicle lumen. It localises to the cytoplasm. The protein resides in the lysosome. It catalyses the reaction adenosine + H2O + H(+) = inosine + NH4(+). The catalysed reaction is 2'-deoxyadenosine + H2O + H(+) = 2'-deoxyinosine + NH4(+). In terms of biological role, catalyzes the hydrolytic deamination of adenosine and 2-deoxyadenosine. Plays an important role in purine metabolism and in adenosine homeostasis. Modulates signaling by extracellular adenosine, and so contributes indirectly to cellular signaling events. May act as a positive regulator of T-cell coactivation. This Xenopus tropicalis (Western clawed frog) protein is Adenosine deaminase (ada).